The following is a 177-amino-acid chain: 3-hydroxyanthranilate 3,4-dioxygenase (177 aa).

An O2-binding site is contributed by Arg-47. Residues His-51, Glu-57, and His-95 each contribute to the Fe cation site. Glu-57 is a binding site for substrate. Substrate is bound by residues Arg-99 and Glu-110. Residues Cys-125, Cys-128, Cys-162, and Cys-165 each contribute to the Fe cation site.

This sequence belongs to the 3-HAO family. As to quaternary structure, homodimer. The cofactor is Fe(2+).

The catalysed reaction is 3-hydroxyanthranilate + O2 = (2Z,4Z)-2-amino-3-carboxymuconate 6-semialdehyde. The protein operates within cofactor biosynthesis; NAD(+) biosynthesis; quinolinate from L-kynurenine: step 3/3. Its function is as follows. Catalyzes the oxidative ring opening of 3-hydroxyanthranilate to 2-amino-3-carboxymuconate semialdehyde, which spontaneously cyclizes to quinolinate. This is 3-hydroxyanthranilate 3,4-dioxygenase from Burkholderia cenocepacia (strain ATCC BAA-245 / DSM 16553 / LMG 16656 / NCTC 13227 / J2315 / CF5610) (Burkholderia cepacia (strain J2315)).